The following is a 460-amino-acid chain: Ribosomal protein uS12 methylthiotransferase RimO (460 aa).

An MTTase N-terminal domain is found at 18-134 (MKIHITSLGC…VTSIVAEVLR (117 aa)). Cys27, Cys63, Cys97, Cys171, Cys175, and Cys178 together coordinate [4Fe-4S] cluster. The 231-residue stretch at 157-387 (STPFHYAYVK…MVLQQEISLS (231 aa)) folds into the Radical SAM core domain. Residues 390 to 456 (QEWIGKTLEV…HYDLMGEAID (67 aa)) form the TRAM domain.

This sequence belongs to the methylthiotransferase family. RimO subfamily. Requires [4Fe-4S] cluster as cofactor.

The protein localises to the cytoplasm. The enzyme catalyses L-aspartate(89)-[ribosomal protein uS12]-hydrogen + (sulfur carrier)-SH + AH2 + 2 S-adenosyl-L-methionine = 3-methylsulfanyl-L-aspartate(89)-[ribosomal protein uS12]-hydrogen + (sulfur carrier)-H + 5'-deoxyadenosine + L-methionine + A + S-adenosyl-L-homocysteine + 2 H(+). In terms of biological role, catalyzes the methylthiolation of an aspartic acid residue of ribosomal protein uS12. The chain is Ribosomal protein uS12 methylthiotransferase RimO from Heliobacterium modesticaldum (strain ATCC 51547 / Ice1).